We begin with the raw amino-acid sequence, 626 residues long: ATP-dependent RNA helicase dbp-8 (626 aa).

Low complexity predominate over residues 1 to 25 (MPSATAAKAKKANANANLKSKVNKA). Positions 1–183 (MPSATAAKAK…ATPALPVPEP (183 aa)) are disordered. Residues 40-98 (DESDFGSELDVEDESAASDEEDEDEDEDEHDLEEGVSDEGEGVSDEEEGVSDEDEDEEN) are compositionally biased toward acidic residues. The span at 161-173 (KQAEAPKTEKTEE) shows a compositional bias: basic and acidic residues. A Q motif motif is present at residues 195 to 223 (TTFDALNVRPWLVQSLANMAIKRPTGIQK). The Helicase ATP-binding domain occupies 226–406 (IPEILKGRDC…ERPPIPGRAP (181 aa)). An ATP-binding site is contributed by 239–246 (SRTGSGKT). A DEAD box motif is present at residues 348–351 (DEAD). A Helicase C-terminal domain is found at 438 to 589 (YLHMFLLTPQ…GVNLETRVIR (152 aa)).

The protein belongs to the DEAD box helicase family. DDX49/DBP8 subfamily.

It is found in the nucleus. It localises to the nucleolus. It carries out the reaction ATP + H2O = ADP + phosphate + H(+). In terms of biological role, ATP-binding RNA helicase involved in 40S ribosomal subunit biogenesis and is required for the normal formation of 18S rRNAs through pre-rRNA processing at A0, A1 and A2 sites. Required for vegetative growth. The sequence is that of ATP-dependent RNA helicase dbp-8 (dbp-8) from Neurospora crassa (strain ATCC 24698 / 74-OR23-1A / CBS 708.71 / DSM 1257 / FGSC 987).